The primary structure comprises 97 residues: Aspartyl/glutamyl-tRNA(Asn/Gln) amidotransferase subunit C (97 aa).

It belongs to the GatC family. Heterotrimer of A, B and C subunits.

It carries out the reaction L-glutamyl-tRNA(Gln) + L-glutamine + ATP + H2O = L-glutaminyl-tRNA(Gln) + L-glutamate + ADP + phosphate + H(+). The enzyme catalyses L-aspartyl-tRNA(Asn) + L-glutamine + ATP + H2O = L-asparaginyl-tRNA(Asn) + L-glutamate + ADP + phosphate + 2 H(+). Allows the formation of correctly charged Asn-tRNA(Asn) or Gln-tRNA(Gln) through the transamidation of misacylated Asp-tRNA(Asn) or Glu-tRNA(Gln) in organisms which lack either or both of asparaginyl-tRNA or glutaminyl-tRNA synthetases. The reaction takes place in the presence of glutamine and ATP through an activated phospho-Asp-tRNA(Asn) or phospho-Glu-tRNA(Gln). The polypeptide is Aspartyl/glutamyl-tRNA(Asn/Gln) amidotransferase subunit C (Picosynechococcus sp. (strain ATCC 27264 / PCC 7002 / PR-6) (Agmenellum quadruplicatum)).